The following is a 428-amino-acid chain: Dihydroorotase (428 aa).

2 residues coordinate Zn(2+): His-59 and His-61. Substrate contacts are provided by residues His-61–Arg-63 and Asn-93. Residues Asp-151, His-178, and His-231 each coordinate Zn(2+). Asn-277 is a substrate binding site. Asp-304 lines the Zn(2+) pocket. Residue Asp-304 is part of the active site. Substrate-binding positions include His-308 and Phe-322 to Gly-323.

The protein belongs to the metallo-dependent hydrolases superfamily. DHOase family. Class I DHOase subfamily. As to quaternary structure, homodimer. Zn(2+) serves as cofactor.

It carries out the reaction (S)-dihydroorotate + H2O = N-carbamoyl-L-aspartate + H(+). The protein operates within pyrimidine metabolism; UMP biosynthesis via de novo pathway; (S)-dihydroorotate from bicarbonate: step 3/3. Functionally, catalyzes the reversible cyclization of carbamoyl aspartate to dihydroorotate. In Bacillus subtilis (strain 168), this protein is Dihydroorotase.